The primary structure comprises 353 residues: Holliday junction branch migration complex subunit RuvB (353 aa).

Residues 1 to 183 (MSGEGLVSAA…FGFTAHMDFY (183 aa)) form a large ATPase domain (RuvB-L) region. Residues L22, R23, G64, K67, T68, S69, 130–132 (EDF), R173, Y183, and R220 each bind ATP. Residue T68 participates in Mg(2+) binding. A small ATPAse domain (RuvB-S) region spans residues 184-254 (DAAELALVLT…VARAALRIYD (71 aa)). Positions 257 to 353 (ALGLDRLDRA…ALFGEDLPAS (97 aa)) are head domain (RuvB-H). Positions 312 and 317 each coordinate DNA.

Belongs to the RuvB family. In terms of assembly, homohexamer. Forms an RuvA(8)-RuvB(12)-Holliday junction (HJ) complex. HJ DNA is sandwiched between 2 RuvA tetramers; dsDNA enters through RuvA and exits via RuvB. An RuvB hexamer assembles on each DNA strand where it exits the tetramer. Each RuvB hexamer is contacted by two RuvA subunits (via domain III) on 2 adjacent RuvB subunits; this complex drives branch migration. In the full resolvosome a probable DNA-RuvA(4)-RuvB(12)-RuvC(2) complex forms which resolves the HJ.

The protein resides in the cytoplasm. The catalysed reaction is ATP + H2O = ADP + phosphate + H(+). The RuvA-RuvB-RuvC complex processes Holliday junction (HJ) DNA during genetic recombination and DNA repair, while the RuvA-RuvB complex plays an important role in the rescue of blocked DNA replication forks via replication fork reversal (RFR). RuvA specifically binds to HJ cruciform DNA, conferring on it an open structure. The RuvB hexamer acts as an ATP-dependent pump, pulling dsDNA into and through the RuvAB complex. RuvB forms 2 homohexamers on either side of HJ DNA bound by 1 or 2 RuvA tetramers; 4 subunits per hexamer contact DNA at a time. Coordinated motions by a converter formed by DNA-disengaged RuvB subunits stimulates ATP hydrolysis and nucleotide exchange. Immobilization of the converter enables RuvB to convert the ATP-contained energy into a lever motion, pulling 2 nucleotides of DNA out of the RuvA tetramer per ATP hydrolyzed, thus driving DNA branch migration. The RuvB motors rotate together with the DNA substrate, which together with the progressing nucleotide cycle form the mechanistic basis for DNA recombination by continuous HJ branch migration. Branch migration allows RuvC to scan DNA until it finds its consensus sequence, where it cleaves and resolves cruciform DNA. This is Holliday junction branch migration complex subunit RuvB from Parafrankia sp. (strain EAN1pec).